The primary structure comprises 467 residues: Transcriptional regulator of yeast form adherence 6 (467 aa).

Residues 43–52 (NTSDAGSIPT) show a composition bias toward polar residues. 5 disordered regions span residues 43–83 (NTSD…NIDS), 128–149 (GSSGGSATPTSSTKKASTNSNN), 245–275 (ESPETIIEENEPVSETSSTNNTTTLHYSNSS), 312–365 (NNQL…SGSK), and 390–439 (STLN…DNDR). The 82-residue stretch at 92–173 (ETKQLHSIIE…KSSVEYILYL (82 aa)) folds into the bHLH domain. Low complexity-rich tracts occupy residues 257–275 (VSETSSTNNTTTLHYSNSS) and 312–322 (NNQLNNRKNSN). The span at 323-338 (PISPQTVCIKSQNPSP) shows a compositional bias: polar residues. Over residues 345-365 (SSLSTSIVNSPSSSSSLSGSK) the composition is skewed to low complexity. A compositionally biased stretch (polar residues) spans 417-432 (GSANTETVNSGSASSD).

It is found in the nucleus. Its function is as follows. Transcription factor required for yeast cell adherence to silicone substrate. The polypeptide is Transcriptional regulator of yeast form adherence 6 (TRY6) (Candida albicans (strain SC5314 / ATCC MYA-2876) (Yeast)).